Consider the following 796-residue polypeptide: Putative aconitate hydratase, mitochondrial (796 aa).

The transit peptide at 1–28 directs the protein to the mitochondrion; it reads MLRQIVSQRSAARRQLIDQLAPCLRRGL. Substrate contacts are provided by residues glutamine 108 and 201 to 203; that span reads DSH. [4Fe-4S] cluster-binding residues include cysteine 399, cysteine 462, and cysteine 465. Residues arginine 489 and arginine 494 each contribute to the substrate site. The tract at residues 540–569 is disordered; sequence EPPTGQDLPSKGFEAGNPAFQPSAPVPDSS. 685–686 is a binding site for substrate; the sequence is AR.

It belongs to the aconitase/IPM isomerase family.

The protein localises to the mitochondrion. Its function is as follows. Has no detectable activity towards cis-acontiate or cis-homoaconitate. This is Putative aconitate hydratase, mitochondrial (acoB) from Emericella nidulans (strain FGSC A4 / ATCC 38163 / CBS 112.46 / NRRL 194 / M139) (Aspergillus nidulans).